The following is a 318-amino-acid chain: NADH-ubiquinone oxidoreductase chain 1 (318 aa).

Helical transmembrane passes span 2-22 (LLTN…FLTL), 69-89 (LMFI…WAPL), 102-122 (ILFI…SGWA), 147-167 (AIIL…TLTI), 172-192 (MWLI…TLAE), 231-251 (IILM…NPLF), 253-273 (ELHT…FLWI), and 294-314 (LPLT…LAGI).

This sequence belongs to the complex I subunit 1 family.

It is found in the mitochondrion inner membrane. The catalysed reaction is a ubiquinone + NADH + 5 H(+)(in) = a ubiquinol + NAD(+) + 4 H(+)(out). In terms of biological role, core subunit of the mitochondrial membrane respiratory chain NADH dehydrogenase (Complex I) that is believed to belong to the minimal assembly required for catalysis. Complex I functions in the transfer of electrons from NADH to the respiratory chain. The immediate electron acceptor for the enzyme is believed to be ubiquinone. In Bradypus variegatus (Brown-throated three-fingered sloth), this protein is NADH-ubiquinone oxidoreductase chain 1 (MT-ND1).